The sequence spans 522 residues: Lysine--tRNA ligase (522 aa).

Positions 44 to 52 match the 'HIGH' region motif; sequence PSGLPHIGT. Residues 290–294 carry the 'KMSKS' region motif; that stretch reads KISKS. K293 serves as a coordination point for ATP.

It belongs to the class-I aminoacyl-tRNA synthetase family.

Its subcellular location is the cytoplasm. It carries out the reaction tRNA(Lys) + L-lysine + ATP = L-lysyl-tRNA(Lys) + AMP + diphosphate. In Rickettsia rickettsii (strain Iowa), this protein is Lysine--tRNA ligase.